Reading from the N-terminus, the 404-residue chain is Cysteine desulfurase IscS (404 aa).

Residues 75–76 (AT), Asn-155, Gln-183, and 203–205 (SGH) each bind pyridoxal 5'-phosphate. Lys-206 is modified (N6-(pyridoxal phosphate)lysine). Thr-243 is a binding site for pyridoxal 5'-phosphate. The Cysteine persulfide intermediate role is filled by Cys-328. Cys-328 is a [2Fe-2S] cluster binding site.

This sequence belongs to the class-V pyridoxal-phosphate-dependent aminotransferase family. NifS/IscS subfamily. As to quaternary structure, homodimer. Forms a heterotetramer with IscU, interacts with other sulfur acceptors. Pyridoxal 5'-phosphate is required as a cofactor.

The protein localises to the cytoplasm. The enzyme catalyses (sulfur carrier)-H + L-cysteine = (sulfur carrier)-SH + L-alanine. It functions in the pathway cofactor biosynthesis; iron-sulfur cluster biosynthesis. Master enzyme that delivers sulfur to a number of partners involved in Fe-S cluster assembly, tRNA modification or cofactor biosynthesis. Catalyzes the removal of elemental sulfur atoms from cysteine to produce alanine. Functions as a sulfur delivery protein for Fe-S cluster synthesis onto IscU, an Fe-S scaffold assembly protein, as well as other S acceptor proteins. This Shewanella denitrificans (strain OS217 / ATCC BAA-1090 / DSM 15013) protein is Cysteine desulfurase IscS.